Consider the following 422-residue polypeptide: UPF0761 membrane protein LHK_02978 (422 aa).

Transmembrane regions (helical) follow at residues Leu-44–Phe-64, Leu-102–Asp-122, Met-141–Gly-161, Leu-178–Leu-198, Ala-212–Leu-232, and Ala-246–Ile-266.

The protein belongs to the UPF0761 family.

The protein resides in the cell inner membrane. The protein is UPF0761 membrane protein LHK_02978 of Laribacter hongkongensis (strain HLHK9).